A 457-amino-acid chain; its full sequence is Exodeoxyribonuclease 7 large subunit (457 aa).

Belongs to the XseA family. Heterooligomer composed of large and small subunits.

It is found in the cytoplasm. It carries out the reaction Exonucleolytic cleavage in either 5'- to 3'- or 3'- to 5'-direction to yield nucleoside 5'-phosphates.. Functionally, bidirectionally degrades single-stranded DNA into large acid-insoluble oligonucleotides, which are then degraded further into small acid-soluble oligonucleotides. The protein is Exodeoxyribonuclease 7 large subunit of Citrobacter koseri (strain ATCC BAA-895 / CDC 4225-83 / SGSC4696).